The sequence spans 598 residues: Elongation factor 4 2 (598 aa).

Positions 2–184 (KHIRNFCIIA…GIVKNLPAPK (183 aa)) constitute a tr-type G domain. Residues 14–19 (DHGKST) and 131–134 (NKID) each bind GTP.

It belongs to the TRAFAC class translation factor GTPase superfamily. Classic translation factor GTPase family. LepA subfamily.

Its subcellular location is the cell inner membrane. It carries out the reaction GTP + H2O = GDP + phosphate + H(+). Required for accurate and efficient protein synthesis under certain stress conditions. May act as a fidelity factor of the translation reaction, by catalyzing a one-codon backward translocation of tRNAs on improperly translocated ribosomes. Back-translocation proceeds from a post-translocation (POST) complex to a pre-translocation (PRE) complex, thus giving elongation factor G a second chance to translocate the tRNAs correctly. Binds to ribosomes in a GTP-dependent manner. The chain is Elongation factor 4 2 from Rhodopirellula baltica (strain DSM 10527 / NCIMB 13988 / SH1).